Here is a 552-residue protein sequence, read N- to C-terminus: Non-structural protein NS1 (552 aa).

The protein belongs to the orbivirus non-structural protein NS1 family.

The polypeptide is Non-structural protein NS1 (Segment-5) (Antilocapra americana (Pronghorn)).